The chain runs to 87 residues: Serine rich endogenous peptide 17 (87 aa).

An N-terminal signal peptide occupies residues 1–28 (MTGKAPFFVILIAALLLLSSFFFGEVKA). Residues 32–87 (KQPKHRKLGNREGDENRSNEIVVQMKARVKRSKSKRGPQKKEPYKKPPCSPPTHPA) are disordered. A compositionally biased stretch (basic and acidic residues) spans 40–49 (GNREGDENRS). Positions 51-71 (EIVVQMKARVKRSKSKRGPQK) match the SCOOP motif motif. A compositionally biased stretch (basic residues) spans 58 to 69 (ARVKRSKSKRGP). The SxS motif essential for MIK2 binding motif lies at 63 to 65 (SKS). A compositionally biased stretch (pro residues) spans 77 to 87 (KPPCSPPTHPA).

The protein belongs to the serine rich endogenous peptide (SCOOP) phytocytokine family. As to quaternary structure, interacts with MIK2 (via extracellular leucine-rich repeat domain); this interaction triggers the formation of complex between MIK2 and the BAK1/SERK3 and SERK4 coreceptors, and subsequent BAK1 activation by phosphorylation.

The protein localises to the cell membrane. It is found in the secreted. It localises to the extracellular space. Its subcellular location is the apoplast. Brassicaceae-specific phytocytokine (plant endogenous peptide released into the apoplast) perceived by MIK2 in a BAK1/SERK3 and SERK4 coreceptors-dependent manner, that modulates various physiological and antimicrobial processes including growth prevention and reactive oxygen species (ROS) response regulation. The sequence is that of Serine rich endogenous peptide 17 from Arabidopsis thaliana (Mouse-ear cress).